Reading from the N-terminus, the 505-residue chain is Holliday junction branch migration ATPase PINA (505 aa).

Residues 2–106 enclose the PINc domain; the sequence is NDLMLDKSAL…IVTADETQKK (105 aa). Residues 434-505 are KH domain; sequence PVNRGITMSN…NIKIKIKLSD (72 aa). The required for maximum interaction with Hjc and Hjm stretch occupies residues 493–505; it reads KKNNIKIKIKLSD.

Homohexamer; the central pore (25-31 Angstroms) is large enough to hold dsDNA. In PDB:5F4H two of the 6 subunits are in an ATP-binding competent conformation. Interacts with Holliday junction resolvase Hjc; in the presence of HJ DNA this interaction decreases branch migration but not Y-DNA unwinding. Interacts with helicase Hjm (hel308) which decreases the DNA helicase activity of Hjm. Ca(2+) serves as cofactor.

It carries out the reaction ATP + H2O = ADP + phosphate + H(+). Promotes Holliday junction (HJ) branch migration and unwinds Y-shaped DNA (but not replication forks or dsDNA) in an ATP hydrolysis-dependent manner. Stimulates cleavage by HJ resolvase Hjc. Unwinds Y-shaped and 3'-flap DNA substrates. In the absence of other proteins stabilizes replication forks (prevents spontaneous unwinding); Hjc, Hjm (Hel308) and PINA coordinate HJ migration and cleavage of replication forks in a coordinated way. Inhibits the 5'-3' (but not 3'-5') helicase activity of helicase Hjm (Hel308) on overhang DNA. Probably acts as an ATP-dependent pump that pulls DNA through the hexamer. The sequence is that of Holliday junction branch migration ATPase PINA from Saccharolobus islandicus (strain REY15A) (Sulfolobus islandicus).